The sequence spans 218 residues: Phosphatidylserine decarboxylase proenzyme (218 aa).

Catalysis depends on Ser-188, which acts as the Schiff-base intermediate with substrate; via pyruvic acid. Residue Ser-188 is modified to Pyruvic acid (Ser); by autocatalysis.

Belongs to the phosphatidylserine decarboxylase family. PSD-A subfamily. Heterodimer of a large membrane-associated beta subunit and a small pyruvoyl-containing alpha subunit. Pyruvate is required as a cofactor. In terms of processing, is synthesized initially as an inactive proenzyme. Formation of the active enzyme involves a self-maturation process in which the active site pyruvoyl group is generated from an internal serine residue via an autocatalytic post-translational modification. Two non-identical subunits are generated from the proenzyme in this reaction, and the pyruvate is formed at the N-terminus of the alpha chain, which is derived from the carboxyl end of the proenzyme. The post-translation cleavage follows an unusual pathway, termed non-hydrolytic serinolysis, in which the side chain hydroxyl group of the serine supplies its oxygen atom to form the C-terminus of the beta chain, while the remainder of the serine residue undergoes an oxidative deamination to produce ammonia and the pyruvoyl prosthetic group on the alpha chain.

It is found in the cell membrane. The catalysed reaction is a 1,2-diacyl-sn-glycero-3-phospho-L-serine + H(+) = a 1,2-diacyl-sn-glycero-3-phosphoethanolamine + CO2. The protein operates within phospholipid metabolism; phosphatidylethanolamine biosynthesis; phosphatidylethanolamine from CDP-diacylglycerol: step 2/2. Catalyzes the formation of phosphatidylethanolamine (PtdEtn) from phosphatidylserine (PtdSer). The polypeptide is Phosphatidylserine decarboxylase proenzyme (Streptomyces coelicolor (strain ATCC BAA-471 / A3(2) / M145)).